We begin with the raw amino-acid sequence, 4115 residues long: Transcription-associated protein 1 (4115 aa).

Positions 1-11 (MDPSIPSTSHR) are enriched in polar residues. Disordered regions lie at residues 1-21 (MDPSIPSTSHRSVPPDRGVQP) and 543-563 (ESEQKRNELPTPTKEHTKKTS). The span at 544-563 (SEQKRNELPTPTKEHTKKTS) shows a compositional bias: basic and acidic residues. 2 TPR repeats span residues 1341–1374 (LDGLQRFVFICPEGFEFEKDSEIYKRYLVHLLDL) and 1820–1853 (QDYDMFFNVVSVFMGKFQTDFTFVREYLEVEVIP). Positions 2678-2701 (LEEPEPMEVDQPKNAPAEEPKDNK) are disordered. In terms of domain architecture, FAT spans 2808-3421 (LIEFISSKHE…SNGASKVSKS (614 aa)). One copy of the TPR 3 repeat lies at 2855–2888 (IETLESLGALYKELAEFDQYSAIWERRSVFPETM). Residues 3740–4100 (EPYFEIVMRG…CNSLIIRAKD (361 aa)) enclose the PI3K/PI4K catalytic domain. The G-loop stretch occupies residues 3746–3752 (VMRGGQV). The segment at 3959–3967 (NLSPMTPHQ) is catalytic loop. Residues 3979-4006 (NPFYRFELGTGQLMDIEHFAHEVPFRLT) are activation loop. The 33-residue stretch at 4083-4115 (DAKVKKDDCNSLIIRAKDSDNLSRMPPTYHAWF) folds into the FATC domain.

It belongs to the PI3/PI4-kinase family. TRA1 subfamily.

It is found in the nucleus. Influences germ cell fate in hermaphrodites. Acts downstream of tra-2 and tra-3 and through the Tip60 histone acetyltransferase complex to regulate germ cell fate decisions. Required for spermatogenesis and embryonic development. Acts with tra-2 to promote expression of fog-3 and control male tail development. Involved in the negative regulation of vulval development. The protein is Transcription-associated protein 1 of Caenorhabditis briggsae.